The sequence spans 424 residues: MDKFRVYGQSRLSGSVNISGAKNAALPILFAAILATEPVKLTNVPELKDIETTLNILRQLGVIANRDETGAVLLDASNINHFTAPYELVKTMRASIWALAPLVARFHQAQVSLPGGCSIGARPVDLHISGLEKLGADIVLEEGYVKAQVSDRLVGTRIVIEKVSVGATLSIMMAATLAKGTTVIENAAREPEIVDTADFLNKMGAKITGAGSDHITTEGVERLTGCEHSIVPDRIETGTFLIAAAISGGRVVCQNTKADTLDAVIDKLREAGAQVDVTENSITLDMLGNRPKAVNIRTAPHPGFPTDMQAQFTLLNMVAEGTSIITETIFENRFMHIPELIRMGGKAEIEGNTAVCHGVEQLSGTEVIATDLRASISLVLAGCIATGETIVDRIYHIDRGYEHIEDKLRALGAKIERFSRSDEA.

22 to 23 (KN) contacts phosphoenolpyruvate. R93 is a binding site for UDP-N-acetyl-alpha-D-glucosamine. C117 acts as the Proton donor in catalysis. C117 is subject to 2-(S-cysteinyl)pyruvic acid O-phosphothioketal. UDP-N-acetyl-alpha-D-glucosamine contacts are provided by residues 122–126 (RPVDL), 162–165 (KVSV), D307, and I329.

The protein belongs to the EPSP synthase family. MurA subfamily.

It localises to the cytoplasm. It catalyses the reaction phosphoenolpyruvate + UDP-N-acetyl-alpha-D-glucosamine = UDP-N-acetyl-3-O-(1-carboxyvinyl)-alpha-D-glucosamine + phosphate. The protein operates within cell wall biogenesis; peptidoglycan biosynthesis. Cell wall formation. Adds enolpyruvyl to UDP-N-acetylglucosamine. This Haemophilus influenzae (strain 86-028NP) protein is UDP-N-acetylglucosamine 1-carboxyvinyltransferase.